Here is a 90-residue protein sequence, read N- to C-terminus: UPF0335 protein RPD_1405 (90 aa).

This sequence belongs to the UPF0335 family.

This chain is UPF0335 protein RPD_1405, found in Rhodopseudomonas palustris (strain BisB5).